A 229-amino-acid chain; its full sequence is Small ribosomal subunit protein uS2c (229 aa).

This sequence belongs to the universal ribosomal protein uS2 family.

The protein localises to the plastid. It localises to the chloroplast. The polypeptide is Small ribosomal subunit protein uS2c (rps2) (Trieres chinensis (Marine centric diatom)).